The primary structure comprises 21 residues: Peptide PGLa-R2 (21 aa).

Position 21 is a leucine amide (leucine 21).

In terms of tissue distribution, expressed by the skin glands.

Its subcellular location is the secreted. Its function is as follows. Antimicrobial peptide. This chain is Peptide PGLa-R2, found in Xenopus ruwenzoriensis (Uganda clawed frog).